Here is a 390-residue protein sequence, read N- to C-terminus: Alkanesulfonate monooxygenase 1 (390 aa).

A disordered region spans residues 364-390; the sequence is TGSSVNTGPFGETIAGDHRPKSLASAS.

This sequence belongs to the SsuD family.

The catalysed reaction is an alkanesulfonate + FMNH2 + O2 = an aldehyde + FMN + sulfite + H2O + 2 H(+). In terms of biological role, catalyzes the desulfonation of aliphatic sulfonates. This is Alkanesulfonate monooxygenase 1 (ssuD1) from Mesorhizobium japonicum (strain LMG 29417 / CECT 9101 / MAFF 303099) (Mesorhizobium loti (strain MAFF 303099)).